A 307-amino-acid polypeptide reads, in one-letter code: Pseudouridine-5'-phosphate glycosidase (307 aa).

Glu-28 serves as the catalytic Proton donor. 2 residues coordinate substrate: Lys-89 and Val-109. Position 141 (Asp-141) interacts with Mn(2+). 143 to 145 (SAD) contacts substrate. The active-site Nucleophile is Lys-162.

It belongs to the pseudouridine-5'-phosphate glycosidase family. Homotrimer. It depends on Mn(2+) as a cofactor.

The catalysed reaction is D-ribose 5-phosphate + uracil = psi-UMP + H2O. In terms of biological role, catalyzes the reversible cleavage of pseudouridine 5'-phosphate (PsiMP) to ribose 5-phosphate and uracil. Functions biologically in the cleavage direction, as part of a pseudouridine degradation pathway. The chain is Pseudouridine-5'-phosphate glycosidase from Nocardioides sp. (strain ATCC BAA-499 / JS614).